A 468-amino-acid chain; its full sequence is UDP-N-acetylmuramate--L-alanine ligase (468 aa).

ATP is bound at residue 114 to 120 (GTHGKTT).

Belongs to the MurCDEF family.

The protein resides in the cytoplasm. The catalysed reaction is UDP-N-acetyl-alpha-D-muramate + L-alanine + ATP = UDP-N-acetyl-alpha-D-muramoyl-L-alanine + ADP + phosphate + H(+). It functions in the pathway cell wall biogenesis; peptidoglycan biosynthesis. Functionally, cell wall formation. This chain is UDP-N-acetylmuramate--L-alanine ligase, found in Methylocella silvestris (strain DSM 15510 / CIP 108128 / LMG 27833 / NCIMB 13906 / BL2).